The sequence spans 758 residues: 5-methyltetrahydropteroyltriglutamate--homocysteine methyltransferase (758 aa).

Residues 17–20 and K117 each bind 5-methyltetrahydropteroyltri-L-glutamate; that span reads RELK. Residues 434–436 and E487 contribute to the L-homocysteine site; that span reads IGS. Residues 434 to 436 and E487 each bind L-methionine; that span reads IGS. Residues 518–519 and W564 contribute to the 5-methyltetrahydropteroyltri-L-glutamate site; that span reads RC. D602 serves as a coordination point for L-homocysteine. L-methionine is bound at residue D602. E608 is a binding site for 5-methyltetrahydropteroyltri-L-glutamate. Residues H644, C646, and E668 each coordinate Zn(2+). Catalysis depends on H697, which acts as the Proton donor. C729 contacts Zn(2+).

This sequence belongs to the vitamin-B12 independent methionine synthase family. Requires Zn(2+) as cofactor.

It carries out the reaction 5-methyltetrahydropteroyltri-L-glutamate + L-homocysteine = tetrahydropteroyltri-L-glutamate + L-methionine. The protein operates within amino-acid biosynthesis; L-methionine biosynthesis via de novo pathway; L-methionine from L-homocysteine (MetE route): step 1/1. Functionally, catalyzes the transfer of a methyl group from 5-methyltetrahydrofolate to homocysteine resulting in methionine formation. The polypeptide is 5-methyltetrahydropteroyltriglutamate--homocysteine methyltransferase (Yersinia enterocolitica serotype O:8 / biotype 1B (strain NCTC 13174 / 8081)).